Reading from the N-terminus, the 439-residue chain is Probable eukaryotic translation initiation factor 5-1 (439 aa).

29-36 (GRGNGIKT) serves as a coordination point for GTP. Residues 143–245 (LKNPPEQKKS…REAAEKRMKE (103 aa)) are disordered. Residues 147 to 186 (PEQKKSSKDKKSMRRAEKERLREGEAADEEMRKLKKEAAS) are compositionally biased toward basic and acidic residues. The span at 214 to 228 (DENDQADSEEDDDDV) shows a compositional bias: acidic residues. Thr-232 is modified (phosphothreonine). A compositionally biased stretch (basic and acidic residues) spans 234–245 (TSREAAEKRMKE). The W2 domain occupies 283–439 (KIPENAHEKL…QNAESESEEE (157 aa)). Phosphoserine occurs at positions 434 and 436.

The protein belongs to the eIF-2-beta/eIF-5 family.

In terms of biological role, catalyzes the hydrolysis of GTP bound to the 40S ribosomal initiation complex (40S.mRNA.Met-tRNA[F].eIF-2.GTP) with the subsequent joining of a 60S ribosomal subunit resulting in the release of eIF-2 and the guanine nucleotide. The subsequent joining of a 60S ribosomal subunit results in the formation of a functional 80S initiation complex (80S.mRNA.Met-tRNA[F]). The protein is Probable eukaryotic translation initiation factor 5-1 of Arabidopsis thaliana (Mouse-ear cress).